We begin with the raw amino-acid sequence, 354 residues long: Allantoicase (354 aa).

It belongs to the allantoicase family.

It carries out the reaction allantoate + H2O = (S)-ureidoglycolate + urea. It functions in the pathway nitrogen metabolism; (S)-allantoin degradation; (S)-ureidoglycolate from allantoate (aminidohydrolase route): step 1/1. In terms of biological role, utilization of purines as secondary nitrogen sources, when primary sources are limiting. This Neurospora crassa (strain ATCC 24698 / 74-OR23-1A / CBS 708.71 / DSM 1257 / FGSC 987) protein is Allantoicase (alc-1).